Reading from the N-terminus, the 89-residue chain is Small ribosomal subunit protein uS17 (89 aa).

It belongs to the universal ribosomal protein uS17 family. As to quaternary structure, part of the 30S ribosomal subunit.

Its function is as follows. One of the primary rRNA binding proteins, it binds specifically to the 5'-end of 16S ribosomal RNA. The chain is Small ribosomal subunit protein uS17 from Syntrophomonas wolfei subsp. wolfei (strain DSM 2245B / Goettingen).